The primary structure comprises 185 residues: ATP-dependent protease subunit HslV (185 aa).

The active site involves T12. Na(+) contacts are provided by A168, C171, and T174.

This sequence belongs to the peptidase T1B family. HslV subfamily. As to quaternary structure, a double ring-shaped homohexamer of HslV is capped on each side by a ring-shaped HslU homohexamer. The assembly of the HslU/HslV complex is dependent on binding of ATP.

It is found in the cytoplasm. It catalyses the reaction ATP-dependent cleavage of peptide bonds with broad specificity.. Allosterically activated by HslU binding. Its function is as follows. Protease subunit of a proteasome-like degradation complex believed to be a general protein degrading machinery. This is ATP-dependent protease subunit HslV from Cereibacter sphaeroides (strain ATCC 17025 / ATH 2.4.3) (Rhodobacter sphaeroides).